Consider the following 251-residue polypeptide: Cell division protein ZapD (251 aa).

Belongs to the ZapD family. Interacts with FtsZ.

It localises to the cytoplasm. Functionally, cell division factor that enhances FtsZ-ring assembly. Directly interacts with FtsZ and promotes bundling of FtsZ protofilaments, with a reduction in FtsZ GTPase activity. In Nitrosomonas eutropha (strain DSM 101675 / C91 / Nm57), this protein is Cell division protein ZapD.